The chain runs to 218 residues: Pyridoxine/pyridoxamine 5'-phosphate oxidase (218 aa).

Substrate contacts are provided by residues 14–17 and Lys-72; that span reads RREY. Residues 67–72, 82–83, Arg-88, Lys-89, and Gln-111 each bind FMN; these read RIVLLK and YT. Tyr-129, Arg-133, and Ser-137 together coordinate substrate. FMN is bound by residues 146 to 147 and Trp-191; that span reads QS. A substrate-binding site is contributed by 197–199; that stretch reads RLH. Arg-201 contacts FMN.

It belongs to the pyridoxamine 5'-phosphate oxidase family. Homodimer. FMN serves as cofactor.

It catalyses the reaction pyridoxamine 5'-phosphate + O2 + H2O = pyridoxal 5'-phosphate + H2O2 + NH4(+). The enzyme catalyses pyridoxine 5'-phosphate + O2 = pyridoxal 5'-phosphate + H2O2. Its pathway is cofactor metabolism; pyridoxal 5'-phosphate salvage; pyridoxal 5'-phosphate from pyridoxamine 5'-phosphate: step 1/1. The protein operates within cofactor metabolism; pyridoxal 5'-phosphate salvage; pyridoxal 5'-phosphate from pyridoxine 5'-phosphate: step 1/1. Its function is as follows. Catalyzes the oxidation of either pyridoxine 5'-phosphate (PNP) or pyridoxamine 5'-phosphate (PMP) into pyridoxal 5'-phosphate (PLP). The sequence is that of Pyridoxine/pyridoxamine 5'-phosphate oxidase from Escherichia coli O139:H28 (strain E24377A / ETEC).